The sequence spans 205 residues: MLAVFLQGFALSAAMILPLGPQNVFVMNQGIRRQYHLMVASLCALSDIVLICGGIFGGSALLSRSPLLLALVTWGGVAFLLWYGWGAFRTAFSRQLALATAEELKQSRWRLVVTMLAVTWLNPHVYLDTFVVLGSLGGQLTPDVRSWFALGAVSASVVWFFALALLASWLAPWLKTQMAQRIINTLVGVVMWGIALQLAWQGASL.

The next 6 helical transmembrane spans lie at 1 to 21 (MLAV…PLGP), 37 to 57 (LMVA…GIFG), 68 to 88 (LLAL…WGAF), 112 to 132 (VVTM…TFVV), 147 to 167 (WFAL…ALLA), and 182 to 202 (IINT…AWQG).

It belongs to the LysE/ArgO transporter (TC 2.A.75) family.

Its subcellular location is the cell inner membrane. It carries out the reaction L-arginine(in) = L-arginine(out). Functionally, involved in the export of arginine. Important to control the intracellular level of arginine and the correct balance between arginine and lysine. The polypeptide is Arginine exporter protein ArgO (Serratia proteamaculans (strain 568)).